A 479-amino-acid polypeptide reads, in one-letter code: Monodehydroascorbate reductase 1, peroxisomal (479 aa).

Residues 1–3 are Cytoplasmic-facing; it reads MGR. The chain crosses the membrane as a helical span at residues 4–24; it reads AFEYVILGGGVAAGYAALEFV. Residues 12 to 15, Glu41, Arg48, Lys53, and 147 to 148 contribute to the FAD site; these read GGVA and RN. Residues 25 to 445 are Peroxisomal-facing; it reads RRNGGASSQE…QATGGGGKPT (421 aa). NAD(+)-binding positions include 172–178, Arg202, and Gly260; that span reads GGYIGME. Residues 174–178, Arg202, and Gly260 each bind NADP(+); that span reads YIGME. FAD is bound at residue Asp297. 314-315 serves as a coordination point for NAD(+); it reads EH. Position 314-315 (314-315) interacts with NADP(+); it reads EH. Val316 provides a ligand contact to FAD. Arg320 lines the L-ascorbate pocket. Tyr347 lines the FAD pocket. Tyr347 lines the NAD(+) pocket. Tyr347 provides a ligand contact to NADP(+). Arg349 serves as a coordination point for L-ascorbate. Residues 446–466 traverse the membrane as a helical segment; it reads CAWHATVGVAAAVSIAAFACW. The Cytoplasmic segment spans residues 467–479; sequence YGWQAPYVLKRDF.

The protein belongs to the FAD-dependent oxidoreductase family. FAD is required as a cofactor.

The protein resides in the peroxisome membrane. It carries out the reaction 2 monodehydro-L-ascorbate radical + NADH + H(+) = 2 L-ascorbate + NAD(+). Functionally, catalyzes the conversion of monodehydroascorbate to ascorbate, oxidizing NADH in the process. Ascorbate is a major antioxidant against reactive oxygen species (ROS) and nitric oxide (NO). The polypeptide is Monodehydroascorbate reductase 1, peroxisomal (Oryza sativa subsp. japonica (Rice)).